The following is a 122-amino-acid chain: Large ribosomal subunit protein uL14 (122 aa).

The protein belongs to the universal ribosomal protein uL14 family. In terms of assembly, part of the 50S ribosomal subunit. Forms a cluster with proteins L3 and L19. In the 70S ribosome, L14 and L19 interact and together make contacts with the 16S rRNA in bridges B5 and B8.

Its function is as follows. Binds to 23S rRNA. Forms part of two intersubunit bridges in the 70S ribosome. The protein is Large ribosomal subunit protein uL14 of Orientia tsutsugamushi (strain Boryong) (Rickettsia tsutsugamushi).